A 196-amino-acid polypeptide reads, in one-letter code: GTP cyclohydrolase-2 (196 aa).

GTP is bound at residue 49–53 (RVHSE). Residues cysteine 54, cysteine 65, and cysteine 67 each contribute to the Zn(2+) site. GTP contacts are provided by residues glutamine 70, 92–94 (EGR), and threonine 114. Catalysis depends on aspartate 126, which acts as the Proton acceptor. The Nucleophile role is filled by arginine 128. GTP-binding residues include threonine 149 and lysine 154.

This sequence belongs to the GTP cyclohydrolase II family. As to quaternary structure, homodimer. The cofactor is Zn(2+).

The enzyme catalyses GTP + 4 H2O = 2,5-diamino-6-hydroxy-4-(5-phosphoribosylamino)-pyrimidine + formate + 2 phosphate + 3 H(+). It participates in cofactor biosynthesis; riboflavin biosynthesis; 5-amino-6-(D-ribitylamino)uracil from GTP: step 1/4. In terms of biological role, catalyzes the conversion of GTP to 2,5-diamino-6-ribosylamino-4(3H)-pyrimidinone 5'-phosphate (DARP), formate and pyrophosphate. The chain is GTP cyclohydrolase-2 from Citrobacter koseri (strain ATCC BAA-895 / CDC 4225-83 / SGSC4696).